The following is a 518-amino-acid chain: MDAIKKKMQAMKVDKDGALERALVCEQEARDANTRAEKAEEEARQLQKKIQTVENELDQTQEALTLVTGKLEEKNKALQNAESEVAALNRRIQLLEEDLERSEERLGSATAKLSEASQAADESERARKILENRALADEERMDALENQLKEARFLAEEADKKYDEVARKLAMVEADLERAEERAEQGENKIVELEEELRVVGNNLKSLEVSEEKANQREEEYKNQIKTLNTRLKEAEARAEFAERSVQKLQKEVDRLEDDLIVEKERYCMIGDSLDEAFVDLIKGLEPFWNPRNPKPPTPKLPTPTPEELAAMEEARAAAEAAAAAEAEAAEAAAAAGEAGPDGAPAAPGEEKAPAKEPTPPKEPTPPPPPPPPFEYSIDLPPEGAEVPYVKNYEPPPPGSEPEPVPAAEGEAAPAAEGAAPPAEGAAPPAEGAVPPADGAAPPAEGAAPAAEGAAPPADGAAPPAEAAAAPADAAAPAAEAAPAEAPAAEATAAEAPPAEAAPAEAAPAAAEGEAPPA.

A coiled-coil region spans residues 14–267 (DKDGALERAL…DDLIVEKERY (254 aa)). Disordered regions lie at residues 101–125 (RSEE…ESER) and 288–518 (FWNP…APPA). Residues 293–305 (NPKPPTPKLPTPT) show a composition bias toward pro residues. A compositionally biased stretch (low complexity) spans 318-348 (AAEAAAAAEAEAAEAAAAAGEAGPDGAPAAP). Composition is skewed to pro residues over residues 357–374 (EPTP…PPPF) and 394–405 (EPPPPGSEPEPV). Low complexity predominate over residues 406–518 (PAAEGEAAPA…AAAEGEAPPA (113 aa)).

The protein belongs to the tropomyosin family. Homodimer. Both isoforms are only expressed in indirect flight muscles.

Its subcellular location is the cytoplasm. It is found in the cytoskeleton. Its function is as follows. Tropomyosin, in association with the troponin complex, plays a central role in the calcium dependent regulation of muscle contraction. The chain is Tropomyosin-1, isoforms 33/34 (Tm1) from Drosophila melanogaster (Fruit fly).